Consider the following 308-residue polypeptide: Ectoine dioxygenase (308 aa).

Residue Gln-131 participates in L-ectoine binding. Position 137 (Lys-137) interacts with 2-oxoglutarate. 3 residues coordinate Fe cation: His-148, Asp-150, and His-249.

Belongs to the PhyH family. EctD subfamily. As to quaternary structure, homodimer. Fe(2+) serves as cofactor.

The catalysed reaction is L-ectoine + 2-oxoglutarate + O2 = 5-hydroxyectoine + succinate + CO2. Involved in the biosynthesis of 5-hydroxyectoine, called compatible solute, which helps organisms to survive extreme osmotic stress by acting as a highly soluble organic osmolyte. Catalyzes the 2-oxoglutarate-dependent selective hydroxylation of L-ectoine to yield (4S,5S)-5-hydroxyectoine. This Bordetella bronchiseptica (strain ATCC BAA-588 / NCTC 13252 / RB50) (Alcaligenes bronchisepticus) protein is Ectoine dioxygenase.